Here is a 353-residue protein sequence, read N- to C-terminus: Histidinol-phosphate aminotransferase 1 (353 aa).

Position 211 is an N6-(pyridoxal phosphate)lysine (K211).

The protein belongs to the class-II pyridoxal-phosphate-dependent aminotransferase family. Histidinol-phosphate aminotransferase subfamily. As to quaternary structure, homodimer. The cofactor is pyridoxal 5'-phosphate.

The enzyme catalyses L-histidinol phosphate + 2-oxoglutarate = 3-(imidazol-4-yl)-2-oxopropyl phosphate + L-glutamate. The protein operates within amino-acid biosynthesis; L-histidine biosynthesis; L-histidine from 5-phospho-alpha-D-ribose 1-diphosphate: step 7/9. This is Histidinol-phosphate aminotransferase 1 (hisC1) from Nostoc sp. (strain PCC 7120 / SAG 25.82 / UTEX 2576).